Here is a 156-residue protein sequence, read N- to C-terminus: uncharacterized protein (156 aa).

Residues 43–84 adopt a coiled-coil conformation; it reads LKIDENEVKLEISVEKLKNLSRVCENIEQVVDKVVEELRYAL.

This is an uncharacterized protein from Aquifex aeolicus (strain VF5).